The primary structure comprises 367 residues: UDP-N-acetylglucosamine--N-acetylmuramyl-(pentapeptide) pyrophosphoryl-undecaprenol N-acetylglucosamine transferase (367 aa).

Residues Thr15–Gly17, Asn127, Arg163, Ser191, Ile249, and Gln294 contribute to the UDP-N-acetyl-alpha-D-glucosamine site.

The protein belongs to the glycosyltransferase 28 family. MurG subfamily.

It is found in the cell inner membrane. It catalyses the reaction di-trans,octa-cis-undecaprenyl diphospho-N-acetyl-alpha-D-muramoyl-L-alanyl-D-glutamyl-meso-2,6-diaminopimeloyl-D-alanyl-D-alanine + UDP-N-acetyl-alpha-D-glucosamine = di-trans,octa-cis-undecaprenyl diphospho-[N-acetyl-alpha-D-glucosaminyl-(1-&gt;4)]-N-acetyl-alpha-D-muramoyl-L-alanyl-D-glutamyl-meso-2,6-diaminopimeloyl-D-alanyl-D-alanine + UDP + H(+). The protein operates within cell wall biogenesis; peptidoglycan biosynthesis. Functionally, cell wall formation. Catalyzes the transfer of a GlcNAc subunit on undecaprenyl-pyrophosphoryl-MurNAc-pentapeptide (lipid intermediate I) to form undecaprenyl-pyrophosphoryl-MurNAc-(pentapeptide)GlcNAc (lipid intermediate II). The sequence is that of UDP-N-acetylglucosamine--N-acetylmuramyl-(pentapeptide) pyrophosphoryl-undecaprenol N-acetylglucosamine transferase from Burkholderia mallei (strain NCTC 10247).